Here is a 269-residue protein sequence, read N- to C-terminus: MNRYQETFKRLSCLKEGCFIPFVVLGDPSLETSIKIIETLIKSGADALEIGIPFSDPLADGPTVQKSNLRALSKNNTFFEYFKILKQLRKKNKKLPIGILIYANLVYNQGIDNFYFQCFNSGLDSVLIADVPIEESKIFYNIANKYKINPIFICPPDADADFLYKISLYAQGFIYVLSRPGVTGIKNNTIALPRDFINKIKKYNSVPLLQGFGISNPKQIKEAISSGLSGVICGSAIINIIEKYLNQEKKMIKEIKKFTHLLKLSTKLE.

Catalysis depends on proton acceptor residues E49 and D60.

The protein belongs to the TrpA family. In terms of assembly, tetramer of two alpha and two beta chains.

It catalyses the reaction (1S,2R)-1-C-(indol-3-yl)glycerol 3-phosphate + L-serine = D-glyceraldehyde 3-phosphate + L-tryptophan + H2O. It functions in the pathway amino-acid biosynthesis; L-tryptophan biosynthesis; L-tryptophan from chorismate: step 5/5. Its function is as follows. The alpha subunit is responsible for the aldol cleavage of indoleglycerol phosphate to indole and glyceraldehyde 3-phosphate. In Buchnera aphidicola subsp. Acyrthosiphon pisum (strain APS) (Acyrthosiphon pisum symbiotic bacterium), this protein is Tryptophan synthase alpha chain.